Reading from the N-terminus, the 443-residue chain is MESTLSLTIRSQWLERHDDEHKIRRDDHRSPFQRDRARILHSAAFRRLQAKTQVHGNSLEDFHRTRLTHSLEAAQLGTGIVAQIKKKQPEYRDLLPTDSLIDALCLAHDIGHPPYGHGGEVALNYMMRDHGGFEGNAQTFRIVTQLEPYTEHFGMNLSRRTLLGLIKYPAFISQTRAASQPAPVSHQRQIKAKQWSPAKGIYDCDKALFDWVLAPLSETDKQQLNAMRDCPHDALSHRKTRYKSLDCSIMELADDIAYGVHDLEDAIVLGLVTRSQWQEGAASQLADCGDPWFEKHISSIGEMLFSGQHHQRKDAIGGMVNALLTSIDVKPVDGEFESPLLAFNAYLDIGMEKALSILKHFVSQYVIQIPQVQIVEYKGQQIIMDLFEALSADPQRLLPLPTRHRWELAETDTSKMRVIADYISSMTDGHAQRLHQQLFSSHH.

Residues 66 to 259 (RLTHSLEAAQ…MELADDIAYG (194 aa)) form the HD domain.

It belongs to the dGTPase family. Type 2 subfamily.

The chain is Deoxyguanosinetriphosphate triphosphohydrolase-like protein from Vibrio vulnificus (strain CMCP6).